The sequence spans 657 residues: Glycogen debranching enzyme (657 aa).

The active-site Nucleophile is the aspartate 336. Glutamate 371 (proton donor) is an active-site residue. Over residues 458–467 (NEANGEENRD) the composition is skewed to basic and acidic residues. The disordered stretch occupies residues 458 to 479 (NEANGEENRDGTNNNYSNNHGK).

This sequence belongs to the glycosyl hydrolase 13 family.

It carries out the reaction Hydrolysis of (1-&gt;6)-alpha-D-glucosidic linkages to branches with degrees of polymerization of three or four glucose residues in limit dextrin.. Its pathway is glycan degradation; glycogen degradation. In terms of biological role, removes maltotriose and maltotetraose chains that are attached by 1,6-alpha-linkage to the limit dextrin main chain, generating a debranched limit dextrin. The chain is Glycogen debranching enzyme from Escherichia coli (strain K12 / DH10B).